Here is a 390-residue protein sequence, read N- to C-terminus: 2-oxoisovalerate dehydrogenase subunit beta, mitochondrial (390 aa).

The transit peptide at 1 to 48 (MAAVAARAGGLLRLGAAGAERRRRGLRCAALVQGFLQPAVDDASQKRR) directs the protein to the mitochondrion. Tyr150 is a binding site for thiamine diphosphate. Residues Gly176, Leu178, Thr179, Cys226, and Asp229 each coordinate K(+). An N6-acetyllysine modification is found at Lys230. Asn231 provides a ligand contact to K(+). Lys239 bears the N6-acetyllysine mark.

Heterotetramer of 2 alpha/BCKDHA and 2 beta chains/BCKDHB that forms the branched-chain alpha-keto acid decarboxylase (E1) component of the BCKD complex. The branched-chain alpha-ketoacid dehydrogenase is a large complex composed of three major building blocks E1, E2 and E3. It is organized around E2, a 24-meric cubic core composed of DBT, to which are associated 6 to 12 copies of E1, and approximately 6 copies of the dehydrogenase E3, a DLD dimer. Thiamine diphosphate is required as a cofactor.

The protein resides in the mitochondrion matrix. The catalysed reaction is N(6)-[(R)-lipoyl]-L-lysyl-[protein] + 3-methyl-2-oxobutanoate + H(+) = N(6)-[(R)-S(8)-2-methylpropanoyldihydrolipoyl]-L-lysyl-[protein] + CO2. Functionally, together with BCKDHA forms the heterotetrameric E1 subunit of the mitochondrial branched-chain alpha-ketoacid dehydrogenase (BCKD) complex. The BCKD complex catalyzes the multi-step oxidative decarboxylation of alpha-ketoacids derived from the branched-chain amino-acids valine, leucine and isoleucine producing CO2 and acyl-CoA which is subsequently utilized to produce energy. The E1 subunit catalyzes the first step with the decarboxylation of the alpha-ketoacid forming an enzyme-product intermediate. A reductive acylation mediated by the lipoylamide cofactor of E2 extracts the acyl group from the E1 active site for the next step of the reaction. The chain is 2-oxoisovalerate dehydrogenase subunit beta, mitochondrial from Rattus norvegicus (Rat).